The following is a 134-amino-acid chain: Small ribosomal subunit protein uS11 (134 aa).

It belongs to the universal ribosomal protein uS11 family. In terms of assembly, part of the 30S ribosomal subunit. Interacts with proteins S7 and S18. Binds to IF-3.

Located on the platform of the 30S subunit, it bridges several disparate RNA helices of the 16S rRNA. Forms part of the Shine-Dalgarno cleft in the 70S ribosome. The chain is Small ribosomal subunit protein uS11 from Paraburkholderia xenovorans (strain LB400).